A 355-amino-acid chain; its full sequence is MQPSTLQALTKRVLATQHVSNDDYCILKRFGLWWHDAPITLYTDGEQILIKTPCYKEGIKLNTALVLAVKENNYDLIVLFTEWGANINYALLSVNKEHTRNLCRKLGAKEGLEASEVLRFFFETKRHKTSSNIILCHELFSNNPFLQNVNMVELRMIIYWELKDLTTNLIVNEDSFTEMLTKYWYGIAVKYNLKEAIQYFCQEYEHLNEWRLICALSFNNVFDLHEICNTMNIDMNINKMMRLACMRDNNFLTIYYCFALGADINRAMYGSVSNFRIENMFFCMDLGADVFEESLELAERHGYSVIVDILSLKIYKANPILLSKETDPEKINTLLKNYYPKNMLAYDICNVDNYL.

Residues 60-92 form an ANK repeat; it reads KLNTALVLAVKENNYDLIVLFTEWGANINYALL.

Belongs to the asfivirus MGF 360 family.

Plays a role in virus cell tropism, and may be required for efficient virus replication in macrophages. The protein is Protein MGF 360-3L of Ornithodoros (relapsing fever ticks).